Reading from the N-terminus, the 309-residue chain is MLRAPGSDAPPTLSVRIAAAAGAACLADMITFPLDTAKVRLQIQGEGQGQPPRAPRYRGVLGTVATLARTEGLQKLYSGLPAGLQRQVGFASLRIGLYDSVREWLSPGQGAAASLGSRISAGVMTGGAAVFIGQPTEVVKVRLQAQSHLHGRKPRYTGTYNAYRIIATTEGLTGLWKGTTPNLMRNVIINCTELVTYDLMKEALVKNHLLADDLPCHFLSALVAGFCTTVLSSPVDVVKTRFVNSVPEQYTSVPNCAMTMLTKEGPLAFFKGFVPSFLRLGSWNVIMFVCFEQLKRELMKSGRTVDCAT.

Residues 1–10 lie on the Mitochondrial intermembrane side of the membrane; the sequence is MLRAPGSDAP. A helical transmembrane segment spans residues 11–32; that stretch reads PTLSVRIAAAAGAACLADMITF. 3 Solcar repeats span residues 11 to 104, 113 to 203, and 212 to 297; these read PTLS…VREW, ASLG…MKEA, and DDLP…LKRE. Residues 33–75 lie on the Mitochondrial matrix side of the membrane; the sequence is PLDTAKVRLQIQGEGQGQPPRAPRYRGVLGTVATLARTEGLQK. Arg58 contacts fatty acid 16:0. The chain crosses the membrane as a helical span at residues 76–98; it reads LYSGLPAGLQRQVGFASLRIGLY. The Mitochondrial intermembrane segment spans residues 99–118; sequence DSVREWLSPGQGAAASLGSR. Residues 119 to 135 traverse the membrane as a helical segment; the sequence is ISAGVMTGGAAVFIGQP. Over 136-180 the chain is Mitochondrial matrix; sequence TEVVKVRLQAQSHLHGRKPRYTGTYNAYRIIATTEGLTGLWKGTT. The chain crosses the membrane as a helical span at residues 181–197; that stretch reads PNLMRNVIINCTELVTY. Residues 198-214 lie on the Mitochondrial intermembrane side of the membrane; the sequence is DLMKEALVKNHLLADDL. A helical transmembrane segment spans residues 215–234; sequence PCHFLSALVAGFCTTVLSSP. The Mitochondrial matrix portion of the chain corresponds to 235–268; that stretch reads VDVVKTRFVNSVPEQYTSVPNCAMTMLTKEGPLA. Cysteine sulfenic acid (-SOH) is present on Cys256. A helical membrane pass occupies residues 269 to 291; that stretch reads FFKGFVPSFLRLGSWNVIMFVCF. Lys271 contacts fatty acid 16:0. Residues 292–309 lie on the Mitochondrial intermembrane side of the membrane; that stretch reads EQLKRELMKSGRTVDCAT.

It belongs to the mitochondrial carrier (TC 2.A.29) family. As to quaternary structure, most probably functions as a monomer. Binds one purine nucleotide per monomer. However, has also been suggested to function as a homodimer or a homotetramer. Tightly associates with cardiolipin in the mitochondrion inner membrane; may stabilize and regulate its activity. Post-translationally, may undergo sulfenylation upon cold exposure. May increase the sensitivity of UCP1 thermogenic function to the activation by noradrenaline probably through structural effects. In terms of processing, may undergo ubiquitin-mediated proteasomal degradation.

It is found in the mitochondrion inner membrane. It catalyses the reaction H(+)(in) = H(+)(out). Has no constitutive proton transporter activity and has to be activated by long-chain fatty acids/LCFAs. Inhibited by purine nucleotides. Both purine nucleotides and LCFAs bind the cytosolic side of the transporter and directly compete to activate or inhibit it. Activated by noradrenaline and reactive oxygen species. Despite lacking canonical translational encoding for selenocysteine, a small pool of the protein has been observed to selectively incorporate selenocysteine at 'Cys-256'. Selenocysteine-modified protein is highly sensitive to redox modification and may constitute a pool of protein highly sensitive to activation by elevated levels of reactive oxygen species (ROS). Its function is as follows. Mitochondrial protein responsible for thermogenic respiration, a specialized capacity of brown adipose tissue and beige fat that participates in non-shivering adaptive thermogenesis to temperature and diet variations and more generally to the regulation of energy balance. Functions as a long-chain fatty acid/LCFA and proton symporter, simultaneously transporting one LCFA and one proton through the inner mitochondrial membrane. However, LCFAs remaining associated with the transporter via their hydrophobic tails, it results in an apparent transport of protons activated by LCFAs. Thereby, dissipates the mitochondrial proton gradient and converts the energy of substrate oxydation into heat instead of ATP. Regulates the production of reactive oxygen species/ROS by mitochondria. The chain is Mitochondrial brown fat uncoupling protein 1 from Canis lupus familiaris (Dog).